The sequence spans 71 residues: Biotinylated protein TB7.3 homolog (71 aa).

One can recognise a Biotinyl-binding domain in the interval 2-71; it reads AEDVRAEIVA…QAGHLIAVID (70 aa). The residue at position 37 (K37) is an N6-biotinyllysine.

The polypeptide is Biotinylated protein TB7.3 homolog (Mycolicibacterium smegmatis (strain ATCC 700084 / mc(2)155) (Mycobacterium smegmatis)).